The sequence spans 586 residues: Dual specificity tyrosine-phosphorylation-regulated kinase 3 (586 aa).

Residues 1–13 (MGGAARDRGRKDA) are compositionally biased toward basic and acidic residues. Positions 1-187 (MGGAARDRGR…QGVIGGPNNG (187 aa)) are disordered. The Protein kinase domain occupies 208–521 (YEVLKIIGKG…PAQALRHPWI (314 aa)). Residues 214-222 (IGKGSFGQV), lysine 237, and 287-290 (FELL) each bind ATP. Residue aspartate 334 is the Proton acceptor of the active site. Tyrosine 368 carries the phosphotyrosine modification. The short motif at 467-480 (RSRRGKKRGPPGSK) is the Nuclear localization signal element.

It belongs to the protein kinase superfamily. CMGC Ser/Thr protein kinase family. MNB/DYRK subfamily. In terms of assembly, interacts with SIRT1. Requires Mg(2+) as cofactor. Post-translationally, ubiquitinated at anaphase by the anaphase-promoting complex (APC/C), leading to its degradation by the proteasome. Protein kinase activity is activated following autophosphorylation at Tyr-368.

The protein resides in the nucleus. The protein localises to the cytoplasm. Its subcellular location is the nucleus speckle. It localises to the cytoplasmic granule. It is found in the cytoskeleton. The protein resides in the microtubule organizing center. The protein localises to the centrosome. The enzyme catalyses L-seryl-[protein] + ATP = O-phospho-L-seryl-[protein] + ADP + H(+). The catalysed reaction is L-threonyl-[protein] + ATP = O-phospho-L-threonyl-[protein] + ADP + H(+). It carries out the reaction L-tyrosyl-[protein] + ATP = O-phospho-L-tyrosyl-[protein] + ADP + H(+). With respect to regulation, protein kinase activity is activated following autophosphorylation at Tyr-368. Functionally, dual-specificity protein kinase that promotes disassembly of several types of membraneless organelles during mitosis, such as stress granules, nuclear speckles and pericentriolar material. Dual-specificity tyrosine-regulated kinases (DYRKs) autophosphorylate a critical tyrosine residue in their activation loop and phosphorylate their substrate on serine and threonine residues. Acts as a central dissolvase of membraneless organelles during the G2-to-M transition, after the nuclear-envelope breakdown: acts by mediating phosphorylation of multiple serine and threonine residues in unstructured domains of proteins, such as SRRM1 and PCM1. Does not mediate disassembly of all membraneless organelles: disassembly of P-body and nucleolus is not regulated by DYRK3. Dissolution of membraneless organelles at the onset of mitosis is also required to release mitotic regulators, such as ZNF207, from liquid-unmixed organelles where they are sequestered and keep them dissolved during mitosis. Regulates mTORC1 by mediating the dissolution of stress granules: during stressful conditions, DYRK3 partitions from the cytosol to the stress granule, together with mTORC1 components, which prevents mTORC1 signaling. When stress signals are gone, the kinase activity of DYRK3 is required for the dissolution of stress granule and mTORC1 relocation to the cytosol: acts by mediating the phosphorylation of the mTORC1 inhibitor AKT1S1, allowing full reactivation of mTORC1 signaling. Also acts as a negative regulator of EPO-dependent erythropoiesis: may place an upper limit on red cell production during stress erythropoiesis. Inhibits cell death due to cytokine withdrawal in hematopoietic progenitor cells. Promotes cell survival upon genotoxic stress through phosphorylation of SIRT1: this in turn inhibits p53/TP53 activity and apoptosis. The polypeptide is Dual specificity tyrosine-phosphorylation-regulated kinase 3 (Mus musculus (Mouse)).